The primary structure comprises 245 residues: tRNA (guanine-N(1)-)-methyltransferase (245 aa).

S-adenosyl-L-methionine-binding positions include glycine 112 and 132 to 137 (IGDFVL).

Belongs to the RNA methyltransferase TrmD family. Homodimer.

The protein localises to the cytoplasm. The enzyme catalyses guanosine(37) in tRNA + S-adenosyl-L-methionine = N(1)-methylguanosine(37) in tRNA + S-adenosyl-L-homocysteine + H(+). Specifically methylates guanosine-37 in various tRNAs. The sequence is that of tRNA (guanine-N(1)-)-methyltransferase from Geobacter metallireducens (strain ATCC 53774 / DSM 7210 / GS-15).